The chain runs to 853 residues: DNA mismatch repair protein MutS (853 aa).

614-621 (GPNMGGKS) provides a ligand contact to ATP.

This sequence belongs to the DNA mismatch repair MutS family.

Its function is as follows. This protein is involved in the repair of mismatches in DNA. It is possible that it carries out the mismatch recognition step. This protein has a weak ATPase activity. The protein is DNA mismatch repair protein MutS of Klebsiella pneumoniae subsp. pneumoniae (strain ATCC 700721 / MGH 78578).